The following is a 359-amino-acid chain: Acyl-CoA desaturase 3 (359 aa).

The disordered stretch occupies residues 1-34 (MPGHLLQEEMTPSYTTTTTITAPPSGSLQNGREK). Residues 1–72 (MPGHLLQEEM…EGPPPKLEYV (72 aa)) are Cytoplasmic-facing. Low complexity predominate over residues 11–27 (TPSYTTTTTITAPPSGS). Residues 73–93 (WRNIILMALLHVGALYGITLV) form a helical membrane-spanning segment. Asparagine 75 contributes to the substrate binding site. At 94 to 97 (PSCK) the chain is on the lumenal side. A helical transmembrane segment spans residues 98-118 (LYTCLFAFVYYVISIEGIGAG). Topologically, residues 119–217 (VHRLWSHRTY…EKLVMFQRRY (99 aa)) are cytoplasmic. Fe cation contacts are provided by histidine 120 and histidine 125. Positions 120–125 (HRLWSH) match the Histidine box-1 motif. Substrate contacts are provided by asparagine 148, arginine 155, and aspartate 156. Residues histidine 157, histidine 160, and histidine 161 each contribute to the Fe cation site. The short motif at 157 to 161 (HRAHH) is the Histidine box-2 element. The substrate site is built by arginine 188 and lysine 189. Phosphoserine is present on serine 203. The chain crosses the membrane as a helical span at residues 218-237 (YKPGILLMCFILPTLVPWYC). At 238–241 (WGET) the chain is on the lumenal side. The helical transmembrane segment at 242-263 (FLNSFYVATLLRYAVVLNATWL) threads the bilayer. Tryptophan 262 contacts substrate. Residues 264–359 (VNSAAHLYGY…RTGDGSHKSG (96 aa)) are Cytoplasmic-facing. Residues histidine 269, histidine 298, histidine 301, and histidine 302 each contribute to the Fe cation site. The Histidine box-3 signature appears at 298–302 (HNYHH).

The protein belongs to the fatty acid desaturase type 1 family. Fe(2+) serves as cofactor. In terms of tissue distribution, detected in skin, but at lower levels compared to Scd1. Detected in the middlle part of the sebaceous gland, but not in hair follicle. Not detected in liver and brain.

It localises to the endoplasmic reticulum membrane. It is found in the microsome membrane. The catalysed reaction is hexadecanoyl-CoA + 2 Fe(II)-[cytochrome b5] + O2 + 2 H(+) = (9Z)-hexadecenoyl-CoA + 2 Fe(III)-[cytochrome b5] + 2 H2O. In terms of biological role, stearoyl-CoA desaturase that utilizes O(2) and electrons from reduced cytochrome b5 to introduce the first double bond into saturated fatty acyl-CoA substrates. Catalyzes the insertion of a cis double bond at the delta-9 position into fatty acyl-CoA substrates including palmitoyl-CoA. Has a strong preference for saturated fatty acids with chain lengths of 14 or 16 carbon atoms (C14:0 and C16:0), and has only very low activity with stearatate (C18:0). Required for the biosynthesis of membrane phospholipids, cholesterol esters and triglycerides. In Mus musculus (Mouse), this protein is Acyl-CoA desaturase 3.